Reading from the N-terminus, the 214-residue chain is Redox-sensing transcriptional repressor Rex (214 aa).

Positions 17–56 (LYYRIFKRFHADQVEKASSKQIADAMGIDSATVRRDFSYF) form a DNA-binding region, H-T-H motif. 91-96 (GCGNIG) is a binding site for NAD(+).

The protein belongs to the transcriptional regulatory Rex family. As to quaternary structure, homodimer.

Its subcellular location is the cytoplasm. Its function is as follows. Modulates transcription in response to changes in cellular NADH/NAD(+) redox state. This is Redox-sensing transcriptional repressor Rex from Streptococcus pyogenes serotype M1.